The following is a 447-amino-acid chain: Phosphoglucosamine mutase (447 aa).

S101 serves as the catalytic Phosphoserine intermediate. 4 residues coordinate Mg(2+): S101, D242, D244, and D246. S101 bears the Phosphoserine mark.

The protein belongs to the phosphohexose mutase family. It depends on Mg(2+) as a cofactor. Post-translationally, activated by phosphorylation.

The enzyme catalyses alpha-D-glucosamine 1-phosphate = D-glucosamine 6-phosphate. Catalyzes the conversion of glucosamine-6-phosphate to glucosamine-1-phosphate. The polypeptide is Phosphoglucosamine mutase (Azorhizobium caulinodans (strain ATCC 43989 / DSM 5975 / JCM 20966 / LMG 6465 / NBRC 14845 / NCIMB 13405 / ORS 571)).